Consider the following 447-residue polypeptide: Methylenetetrahydrofolate--tRNA-(uracil-5-)-methyltransferase TrmFO (447 aa).

10-15 (GAGLAG) serves as a coordination point for FAD.

It belongs to the MnmG family. TrmFO subfamily. FAD is required as a cofactor.

It localises to the cytoplasm. It carries out the reaction uridine(54) in tRNA + (6R)-5,10-methylene-5,6,7,8-tetrahydrofolate + NADH + H(+) = 5-methyluridine(54) in tRNA + (6S)-5,6,7,8-tetrahydrofolate + NAD(+). The enzyme catalyses uridine(54) in tRNA + (6R)-5,10-methylene-5,6,7,8-tetrahydrofolate + NADPH + H(+) = 5-methyluridine(54) in tRNA + (6S)-5,6,7,8-tetrahydrofolate + NADP(+). Functionally, catalyzes the folate-dependent formation of 5-methyl-uridine at position 54 (M-5-U54) in all tRNAs. The polypeptide is Methylenetetrahydrofolate--tRNA-(uracil-5-)-methyltransferase TrmFO (Lactococcus lactis subsp. lactis (strain IL1403) (Streptococcus lactis)).